Here is a 152-residue protein sequence, read N- to C-terminus: Small ribosomal subunit protein uS17A (152 aa).

This sequence belongs to the universal ribosomal protein uS17 family. Component of the small ribosomal subunit (SSU). Mature yeast ribosomes consist of a small (40S) and a large (60S) subunit. The 40S small subunit contains 1 molecule of ribosomal RNA (18S rRNA) and at least 33 different proteins. The large 60S subunit contains 3 rRNA molecules (25S, 5.8S and 5S rRNA) and at least 46 different proteins.

It localises to the cytoplasm. It is found in the nucleus. Functionally, component of the ribosome, a large ribonucleoprotein complex responsible for the synthesis of proteins in the cell. The small ribosomal subunit (SSU) binds messenger RNAs (mRNAs) and translates the encoded message by selecting cognate aminoacyl-transfer RNA (tRNA) molecules. The large subunit (LSU) contains the ribosomal catalytic site termed the peptidyl transferase center (PTC), which catalyzes the formation of peptide bonds, thereby polymerizing the amino acids delivered by tRNAs into a polypeptide chain. The nascent polypeptides leave the ribosome through a tunnel in the LSU and interact with protein factors that function in enzymatic processing, targeting, and the membrane insertion of nascent chains at the exit of the ribosomal tunnel. This chain is Small ribosomal subunit protein uS17A (rps1101), found in Schizosaccharomyces pombe (strain 972 / ATCC 24843) (Fission yeast).